A 478-amino-acid polypeptide reads, in one-letter code: tRNA(Ile)-lysidine synthase (478 aa).

27-32 (SGGSDS) is a binding site for ATP.

Belongs to the tRNA(Ile)-lysidine synthase family.

Its subcellular location is the cytoplasm. The catalysed reaction is cytidine(34) in tRNA(Ile2) + L-lysine + ATP = lysidine(34) in tRNA(Ile2) + AMP + diphosphate + H(+). Ligates lysine onto the cytidine present at position 34 of the AUA codon-specific tRNA(Ile) that contains the anticodon CAU, in an ATP-dependent manner. Cytidine is converted to lysidine, thus changing the amino acid specificity of the tRNA from methionine to isoleucine. The polypeptide is tRNA(Ile)-lysidine synthase (Rickettsia conorii (strain ATCC VR-613 / Malish 7)).